Here is a 229-residue protein sequence, read N- to C-terminus: DNA mismatch repair protein MutH (229 aa).

The protein belongs to the MutH family.

The protein localises to the cytoplasm. Functionally, sequence-specific endonuclease that cleaves unmethylated GATC sequences. It is involved in DNA mismatch repair. This Escherichia coli O17:K52:H18 (strain UMN026 / ExPEC) protein is DNA mismatch repair protein MutH.